Reading from the N-terminus, the 211-residue chain is Probable GTP-binding protein EngB (211 aa).

One can recognise an EngB-type G domain in the interval 26 to 200; that stretch reads SGIEIAFAGR…RQKLDDWFAA (175 aa). GTP-binding positions include 34–41, 61–65, 79–82, 146–149, and 179–181; these read GRSNAGKS, GRTRL, DLPG, TKAD, and FSS. 2 residues coordinate Mg(2+): Ser-41 and Thr-63.

This sequence belongs to the TRAFAC class TrmE-Era-EngA-EngB-Septin-like GTPase superfamily. EngB GTPase family. Mg(2+) serves as cofactor.

Functionally, necessary for normal cell division and for the maintenance of normal septation. The sequence is that of Probable GTP-binding protein EngB from Sodalis glossinidius (strain morsitans).